Here is a 222-residue protein sequence, read N- to C-terminus: uncharacterized protein (222 aa).

The next 2 helical transmembrane spans lie at 22–42 (IRVI…FLYI) and 189–209 (AICL…FCLV).

It is found in the cell membrane. This is an uncharacterized protein from Escherichia coli (strain K12).